Consider the following 1470-residue polypeptide: MDPRKPRQDPVNDARFYESLIKPPHLRTPDDIRNVYEQLRQLDTFSNLFIGPLKALCKTARYERHPAQYILFRDGDVARSWYILLSGSVFIENQIYMPYGCFGKRTGQNHRRTHNCLLLQESEMIVIDYPTEPQSNGMSPRTPPRGIHHSGEPVHQKTPRKSAPNMSVDSIAMPPPPVPPRPLRLPQTAAKGPAPLPPRGLPRTYPLDFPVDIPTTSSSSSNTSYNDQHRSQVYLNGLSADEDTLVRVKHRREKSNSVGGQAQNGISTARRLRGRSTASSTTTEGETASNEGADSDEDEGSMPSQESSSGGFMDLRDSVRECLEKEPSERNSEDLAVLLDFMQHMSAFAALPMSIKRQLCLKMVFAVVNDAGTVVLAHNEKLDSWSVIVNGCVEVVKPSGERVEYKLGDSFGAEPTPATQIHIGEMRTMVDDCEFVLVEHRDFCSIMSTIGDHIEKDRDGLTGEVVSEVERRTVGTHCGQVLIKGKPDKLIHHLVDERDHNVDPHYVDDFLLTYRVFIRDPTTIFEKLMLWFADSIYRDKVARLVLLWVNNHFNDFETNDEMWNLLERFEGALERDGMHSQLSLLNIACSVKAKPRQVILTRRKDDKMMMRLVGGQESGNSVYVAEVFPDTSAAREGVKRADEMLEVNQQSAKYLSAKKAEDLLTGSLSLTLMLKNNVLGYKETIGKIEHNKPKNGTSRSGAGIPMVIPVHKTSITGKKSSTTSSKSGMMEKLMTILKSSKEDSMDFTDEAKISSADLRPSRSNPDITSISQYYGPVRSECPEHVLKIYRNDQTFKYLPVYKETSAQNVVQLALQEFNMTAEGSPEWSLCECTVTIDGVIKQRRLPPQMENLAERIALNSRYYLKNNSRSEPLVPDELAPELLKEAQTQLLSLNAQVVAAQLTLQDFSVFSAIEPTEFLDNLFKLDSKYGSPKLEEFEQLFNREMWWVATEICTERHVQKRAKLIKKFIKVARYCRDLRNFNSMFAIMSGLDKPAVRRLHSSWERVSSKYIRMLDEIHQLVDPSRNMSKYRQHLAEVAQEPPVVPIYPVIKKDLTFAHDGNATYSEKLINFEKLRLIAKSIRGVMKLSSAPYEIASMAERSGGVVMDALLHMNSFENSNVATMRKGMSGKQNQPRKKVYEQALMVRKVKSYLEGLHVVDNEMELDSMSYDIEPQVQTAHRGANSSSTANIRRVPSPTPSSLSSQSAGSADQSSRHRLLFNGTGSISSAGGGSKFGVESPQAVQKMLSLVQNSKVKGAPPQITSPSTSARSSLQRNMPRVTGRQATSSAQGPVQLNEETSTVTTYYQSDNGRRQRSGSEGRFDNIPPSTFYLTSDGLTVSPRQSLSVVIPTHPHGHSPTSPRCRSRSPASSGCSSFSTIASIAATSMAAAPSAFVSNPYQHHQTVRGHVIGHRPMPIVTSGSATLPNHVSPRGLPPKSRPTILPGSHTNSSSRMGTIKEATFLTSEQVSRV.

2 disordered regions span residues 130–227 and 250–313; these read PTEP…SYND and HRRE…GGFM. Pro residues predominate over residues 173 to 183; sequence MPPPPVPPRPL. Low complexity-rich tracts occupy residues 184-193 and 215-224; these read RLPQTAAKGP and TTSSSSSNTS. Residues 256–266 show a composition bias toward polar residues; the sequence is NSVGGQAQNGI. A compositionally biased stretch (low complexity) spans 275 to 292; that stretch reads RSTASSTTTEGETASNEG. 347–463 is an a nucleoside 3',5'-cyclic phosphate binding site; it reads AFAALPMSIK…IEKDRDGLTG (117 aa). In terms of domain architecture, N-terminal Ras-GEF spans 478-592; the sequence is CGQVLIKGKP…SLLNIACSVK (115 aa). One can recognise a PDZ domain in the interval 597–679; that stretch reads QVILTRRKDD…LTLMLKNNVL (83 aa). The Ras-associating domain occupies 782 to 869; the sequence is PEHVLKIYRN…SRYYLKNNSR (88 aa). One can recognise a Ras-GEF domain in the interval 894 to 1124; that stretch reads NAQVVAAQLT…FENSNVATMR (231 aa). Residues 1176 to 1189 are compositionally biased toward polar residues; that stretch reads QTAHRGANSSSTAN. 4 disordered regions span residues 1176 to 1213, 1253 to 1326, 1347 to 1370, and 1422 to 1455; these read QTAH…DQSS, KVKG…NIPP, VIPT…PASS, and ATLP…RMGT. The segment covering 1198–1211 has biased composition (low complexity); it reads PSSLSSQSAGSADQ. Composition is skewed to polar residues over residues 1260–1274 and 1282–1308; these read QITS…SLQR and RQAT…YQSD. Positions 1309–1321 are enriched in basic and acidic residues; the sequence is NGRRQRSGSEGRF. Over residues 1349–1370 the composition is skewed to low complexity; sequence PTHPHGHSPTSPRCRSRSPASS.

The protein belongs to the RAPGEF2 family. As to expression, expressed in hermaphrodite-specific neurons (HSNs), oviduct sheath cells and lateral seam cells.

In terms of biological role, acts as a guanine nucleotide exchange factor for small G protein GTPases like rap-1 and rap-2. Required in the hypodermis, especially in the seam cells, for proper formation of the cuticle. The protein is Rap guanine nucleotide exchange factor (pxf-1) of Caenorhabditis elegans.